A 510-amino-acid polypeptide reads, in one-letter code: Glycosyl hydrolase YngK (510 aa).

Positions 1–30 are cleaved as a signal peptide; it reads MKVCQKSIVRFLVSLIIGTFVISVPFMANA.

This sequence belongs to the glycosyl hydrolase-like 10 (GHL10) family.

This is Glycosyl hydrolase YngK (yngK) from Bacillus subtilis (strain 168).